The sequence spans 75 residues: UPF0352 protein YejL (75 aa).

Belongs to the UPF0352 family.

The sequence is that of UPF0352 protein YejL from Salmonella arizonae (strain ATCC BAA-731 / CDC346-86 / RSK2980).